The following is a 169-amino-acid chain: MSHRTSSAFRAERSFRSSSSSSSSSSSSASRALPAQDPPMEKALSMFSDDFGSFMLPHSEPLAFPARPGGQGNIKTLGDAYEFTVDMRDFSPEDIIVTTFNNHIEVRAEKLAADGTVMNTFAHKCQLPEDVDPTSVTSALREDGSLTIRARRHPHTEHVQQTFRTEIKI.

The tract at residues 1-37 (MSHRTSSAFRAERSFRSSSSSSSSSSSSASRALPAQD) is disordered. Residues 1–70 (MSHRTSSAFR…PLAFPARPGG (70 aa)) are required for localization to SC35 splicing speckles. The segment covering 16 to 32 (RSSSSSSSSSSSSASRA) has biased composition (low complexity). Residues 61 to 169 (PLAFPARPGG…QQTFRTEIKI (109 aa)) form the sHSP domain.

Belongs to the small heat shock protein (HSP20) family. In terms of assembly, interacts with C-terminal domain of actin-binding protein 280. In terms of tissue distribution, found in both cardiac and slow skeletal (soleus) muscle.

It localises to the cytoplasm. Its subcellular location is the nucleus. The protein resides in the cajal body. In Mus musculus (Mouse), this protein is Heat shock protein beta-7 (Hspb7).